Here is a 244-residue protein sequence, read N- to C-terminus: Small ribosomal subunit protein eS4 (244 aa).

The region spanning 43-106 is the S4 RNA-binding domain; it reads LPLLLVVRDV…DETYLVLFDE (64 aa).

It belongs to the eukaryotic ribosomal protein eS4 family.

In Methanococcus maripaludis (strain DSM 14266 / JCM 13030 / NBRC 101832 / S2 / LL), this protein is Small ribosomal subunit protein eS4.